The sequence spans 527 residues: MDNKFYVNTNGERNIWSTAAEENMTTAASSSQSQPPQMQSSKFHQPENHIHINDGFSSGAFDLQTLESSFRGLSFADSNVHQNGNPILPAHQYNQVFNGGGGSYGDGYLFPPSGSYHHYELKDLQRFNQNQQRLSYQNDYVNQSYRYDTIGGGNGMLNNSFLNGVPCASRNNVSDYYTNIFGYGVNNSWRSNEGCTYNQDQAASSMENGRGSYFSIATDRVWSKELEKTIFVGTKETIDMIFDGLIVGICELMVDPFGNDVVKLLIGKCSSEQIILIVDVVTRHISKFVNICFNPIGTLAIQVLLTSIHERANNQIPRIMDAISSVALQLTRNTNAKYVILACFRMFTSSQCRRLLEVVSQHCYQIAIDQNGCCLLQQCFDKERVPNHEIRQRLISEVIEHALKLCLNCHGNYVVQYVVELDNQHETDLLVNKLLRNYAHLARNKYGSHVVQKLLKLRGIDSKLIVVDLLRGIDTLLLDPFGNYVIQTAWFVSKEDVRQMLRYYIERNIRLMRCNKFGNKILEKLNI.

The disordered stretch occupies residues 22 to 51 (ENMTTAASSSQSQPPQMQSSKFHQPENHIH). Low complexity predominate over residues 24-41 (MTTAASSSQSQPPQMQSS). The PUM-HD domain occupies 184–527 (GVNNSWRSNE…GNKILEKLNI (344 aa)). Pumilio repeat units follow at residues 205–243 (SMENGRGSYFSIATDRVWSKELEKTIFVGTKETIDMIFD), 244–279 (GLIVGICELMVDPFGNDVVKLLIGKCSSEQIILIVD), 283–321 (RHISKFVNICFNPIGTLAIQVLLTSIHERANNQIPRIMD), 322–357 (AISSVALQLTRNTNAKYVILACFRMFTSSQCRRLLE), 358–396 (VVSQHCYQIAIDQNGCCLLQQCFDKERVPNHEIRQRLIS), 397–432 (EVIEHALKLCLNCHGNYVVQYVVELDNQHETDLLVN), 433–468 (KLLRNYAHLARNKYGSHVVQKLLKLRGIDSKLIVVD), and 469–503 (LLRGIDTLLLDPFGNYVIQTAWFVSKEDVRQMLRY).

Its subcellular location is the cytoplasm. Sequence-specific RNA-binding protein that regulates translation and mRNA stability by binding the 3'-UTR of target mRNAs. The polypeptide is Putative pumilio homolog 13 (APUM13) (Arabidopsis thaliana (Mouse-ear cress)).